Here is a 98-residue protein sequence, read N- to C-terminus: Defensin (98 aa).

Positions 1 to 19 (MRTFLVTFVLVVVVGVISA) are cleaved as a signal peptide. Residues 20 to 58 (YPSNPVEVEAEDFDAQDPDLQTFQDTFYEVPQVHSRQKR) constitute a propeptide that is removed on maturation. 3 cysteine pairs are disulfide-bonded: Cys-61–Cys-88, Cys-74–Cys-94, and Cys-78–Cys-96.

Is synthesized by the fat body and eventually secreted into the hemolymph.

It is found in the secreted. In terms of biological role, has antiparasitic activity against promastigote forms of L.major, and antibacterial activity against Gram-positive bacterium S.aureus. Has antifungal activity against the yeasts C.albicans and S.cerevisiae, but not C.glabrata. Has antifungal activity against filamentous fungi A.fumigatus, F.culmorum, F.oxysporum, N.crassa, T.viride and T.mentagrophytes, but not B.bassiana. This is Defensin from Phlebotomus duboscqi (Sandfly).